A 1132-amino-acid polypeptide reads, in one-letter code: MGMACLTMTEMEATSTSPVHQNGDIPGSANSVKQIEPVLQVYLYHSLGQAEGEYLKFPSGEYVAEEICVAASKACGITPVYHNMFALMSETERIWYPPNHVFHIDESTRHDILYRIRFYFPHWYCSGSSRTYRYGVSRGAEAPLLDDFVMSYLFAQWRHDFVHGWIKVPVTHETQEECLGMAVLDMMRIAKEKDQTPLAVYNSVSYKTFLPKCVRAKIQDYHILTRKRIRYRFRRFIQQFSQCKATARNLKLKYLINLETLQSAFYTEQFEVKESARGPSGEEIFATIIITGNGGIQWSRGKHKESETLTEQDVQLYCDFPDIIDVSIKQANQECSNESRIVTVHKQDGKVLEIELSSLKEALSFVSLIDGYYRLTADAHHYLCKEVAPPAVLENIHSNCHGPISMDFAISKLKKAGNQTGLYVLRCSPKDFNKYFLTFAVERENVIEYKHCLITKNENGEYNLSGTKRNFSNLKDLLNCYQMETVRSDSIIFQFTKCCPPKPKDKSNLLVFRTNGISDVQISPTLQRHNNVNQMVFHKIRNEDLIFNESLGQGTFTKIFKGVRREVGDYGQLHKTEVLLKVLDKAHRNYSESFFEAASMMSQLSHKHLVLNYGVCVCGEENILVQEFVKFGSLDTYLKKNKNSINILWKLGVAKQLAWAMHFLEEKSLIHGNVCAKNILLIREEDRRTGNPPFIKLSDPGISITVLPKDILQERIPWVPPECIENPKNLNLATDKWSFGTTLWEICSGGDKPLSALDSQRKLQFYEDKHQLPAPKWTELANLINNCMDYEPDFRPAFRAVIRDLNSLFTPDYELLTENDMLPNMRIGALGFSGAFEDRDPTQFEERHLKFLQQLGKGNFGSVEMCRYDPLQDNTGEVVAVKKLQHSTEEHLRDFEREIEILKSLQHDNIVKYKGVCYSAGRRNLRLIMEYLPYGSLRDYLQKHKERIDHKKLLQYTSQICKGMEYLGTKRYIHRDLATRNILVENENRVKIGDFGLTKVLPQDKEYYKVKEPGESPIFWYAPESLTESKFSVASDVWSFGVVLYELFTYIEKSKSPPVEFMRMIGNDKQGQMIVFHLIELLKSNGRLPRPEGCPDEIYVIMTECWNNNVSQRPSFRDLSLRVDQIRDSIAA.

The segment at 1 to 239 is interaction with cytokine/interferon/growth hormone receptors; it reads MGMACLTMTE…RYRFRRFIQQ (239 aa). An FERM domain is found at 37–380; sequence PVLQVYLYHS…GYYRLTADAH (344 aa). At Tyr-119 the chain carries Phosphotyrosine; by autocatalysis. A phosphotyrosine mark is found at Tyr-372 and Tyr-373. Positions 401 to 482 constitute an SH2; atypical domain; sequence HGPISMDFAI…NLKDLLNCYQ (82 aa). Ser-523 bears the Phosphoserine mark. The region spanning 545 to 809 is the Protein kinase 1 domain; sequence LIFNESLGQG…AVIRDLNSLF (265 aa). Tyr-570 and Tyr-813 each carry phosphotyrosine. Positions 849-1124 constitute a Protein kinase 2 domain; the sequence is LKFLQQLGKG…SFRDLSLRVD (276 aa). 855–863 is an ATP binding site; sequence LGKGNFGSV. Residue Tyr-868 is modified to Phosphotyrosine; by autocatalysis. Residue Lys-882 participates in ATP binding. Residues Tyr-966 and Tyr-972 each carry the phosphotyrosine; by autocatalysis modification. Asp-976 acts as the Proton acceptor in catalysis. A phosphotyrosine; by autocatalysis mark is found at Tyr-1007 and Tyr-1008.

It belongs to the protein kinase superfamily. Tyr protein kinase family. JAK subfamily. As to quaternary structure, interacts with IL23R, SKB1 and STAM2. Interacts with EPOR. Interacts with LYN. Interacts with SIRPA. Interacts with SH2B1. Interacts with TEC. Interacts with IFNGR2 (via intracellular domain). Interacts with LEPR (Isoform B). Interacts with HSP90AB1; promotes functional activation in a heat shock-dependent manner. Interacts with STRA6. Interacts with ASB2; the interaction targets JAK2 for Notch-induced proteasomal degradation. Interacts with MPL/TPOR. It depends on Mg(2+) as a cofactor. In terms of processing, autophosphorylated, leading to regulate its activity. Leptin promotes phosphorylation on tyrosine residues, including phosphorylation on Tyr-813. Autophosphorylation on Tyr-119 in response to EPO down-regulates its kinase activity. Autophosphorylation on Tyr-868, Tyr-966 and Tyr-972 in response to growth hormone (GH) are required for maximal kinase activity. Also phosphorylated by TEC. Phosphorylated on tyrosine residues in response to interferon gamma signaling. Phosphorylated on tyrosine residues in response to a signaling cascade that is activated by increased cellular retinol. Post-translationally, undergoes Notch-induced ubiquitination and subsequent proteasomal degradation which is mediated by ASB1 or ASB2, the substrate-recognition components of probable ECS E3 ubiquitin-protein ligase complexes. As to expression, ubiquitously expressed throughout most tissues.

The protein resides in the endomembrane system. The protein localises to the cytoplasm. Its subcellular location is the nucleus. It carries out the reaction L-tyrosyl-[protein] + ATP = O-phospho-L-tyrosyl-[protein] + ADP + H(+). Regulated by autophosphorylation, can both activate or decrease activity. Heme regulates its activity by enhancing the phosphorylation on Tyr-1007 and Tyr-1008. Its function is as follows. Non-receptor tyrosine kinase involved in various processes such as cell growth, development, differentiation or histone modifications. Mediates essential signaling events in both innate and adaptive immunity. In the cytoplasm, plays a pivotal role in signal transduction via its association with type I receptors such as growth hormone (GHR), prolactin (PRLR), leptin (LEPR), erythropoietin (EPOR), thrombopoietin receptor (MPL/TPOR); or type II receptors including IFN-alpha, IFN-beta, IFN-gamma and multiple interleukins. Following ligand-binding to cell surface receptors, phosphorylates specific tyrosine residues on the cytoplasmic tails of the receptor, creating docking sites for STATs proteins. Subsequently, phosphorylates the STATs proteins once they are recruited to the receptor. Phosphorylated STATs then form homodimer or heterodimers and translocate to the nucleus to activate gene transcription. For example, cell stimulation with erythropoietin (EPO) during erythropoiesis leads to JAK2 autophosphorylation, activation, and its association with erythropoietin receptor (EPOR) that becomes phosphorylated in its cytoplasmic domain. Then, STAT5 (STAT5A or STAT5B) is recruited, phosphorylated and activated by JAK2. Once activated, dimerized STAT5 translocates into the nucleus and promotes the transcription of several essential genes involved in the modulation of erythropoiesis. Part of a signaling cascade that is activated by increased cellular retinol and that leads to the activation of STAT5 (STAT5A or STAT5B). In addition, JAK2 mediates angiotensin-2-induced ARHGEF1 phosphorylation. Plays a role in cell cycle by phosphorylating CDKN1B. Cooperates with TEC through reciprocal phosphorylation to mediate cytokine-driven activation of FOS transcription. In the nucleus, plays a key role in chromatin by specifically mediating phosphorylation of 'Tyr-41' of histone H3 (H3Y41ph), a specific tag that promotes exclusion of CBX5 (HP1 alpha) from chromatin. Up-regulates the potassium voltage-gated channel activity of KCNA3. The polypeptide is Tyrosine-protein kinase JAK2 (Mus musculus (Mouse)).